We begin with the raw amino-acid sequence, 284 residues long: Short-chain dehydrogenase RED1 (284 aa).

NADP(+) is bound by residues Ile-11, Thr-37, Asp-58, Asn-86, Tyr-151, Lys-155, Val-184, and Thr-186. The Proton acceptor role is filled by Tyr-151. The active-site Lowers pKa of active site Tyr is Lys-155.

Belongs to the short-chain dehydrogenases/reductases (SDR) family.

It functions in the pathway polyketide biosynthesis. In terms of biological role, short-chain dehydrogenase; part of the gene cluster that mediates the biosynthesis of pyriculol and pyriculariol, two heptaketides that induce lesion formation upon application on rice leaves but are dispensable for pathogenicity. The highly reducing polyketide synthase synthesizes the heptaketide backbone of pyriculol and pyriculariol. Pyriculol and pyriculariol contain several hydroxyl moieties and double bonds, so it can be assumed that several reduction steps occur during biosynthesis. These reactions could be executed by PKS19 itself or partly by the tailoring enzymes OXR1, OXR2, RED1, RED2 or RED3, identified within the cluster. The FAD-linked oxidoreductase OXR1 is the only tailoring enzyme for which the function has been determined yet, and is involved in the oxidation of dihydropyriculol and dihydropyriculariol into pyriculol and pyriculariol, respectively. The protein is Short-chain dehydrogenase RED1 of Pyricularia oryzae (strain 70-15 / ATCC MYA-4617 / FGSC 8958) (Rice blast fungus).